Reading from the N-terminus, the 365-residue chain is 3-galactosyl-N-acetylglucosaminide 4-alpha-L-fucosyltransferase FUT3 (365 aa).

Topologically, residues 1 to 15 (MYPPGCAKVKCSWHH) are cytoplasmic. A helical; Signal-anchor for type II membrane protein transmembrane segment spans residues 16-34 (CLPGLLLQLLLALCFFSYL). Residues 35-365 (RMSQEKPKPK…TVPSIASWFQ (331 aa)) lie on the Lumenal side of the membrane. Asn100, Asn158, and Asn189 each carry an N-linked (GlcNAc...) asparagine glycan.

The protein belongs to the glycosyltransferase 10 family. Post-translationally, glycosylated. Liver, kidney, lung and brain.

The protein localises to the golgi apparatus. It localises to the golgi stack membrane. It carries out the reaction a beta-D-galactosyl-(1-&gt;3)-N-acetyl-beta-D-glucosaminyl derivative + GDP-beta-L-fucose = a beta-D-galactosyl-(1-&gt;3)-[alpha-L-fucosyl-(1-&gt;4)]-N-acetyl-beta-D-glucosaminyl derivative + GDP + H(+). It catalyses the reaction an N-acetyl-alpha-neuraminyl-(2-&gt;3)-beta-D-galactosyl-(1-&gt;4)-N-acetyl-beta-D-glucosaminyl derivative + GDP-beta-L-fucose = an alpha-Neu5Ac-(2-&gt;3)-beta-D-Gal-(1-&gt;4)-[alpha-L-Fuc-(1-&gt;3)]-beta-D-GlcNAc derivative + GDP + H(+). The enzyme catalyses a beta-D-galactosyl-(1-&gt;4)-N-acetyl-beta-D-glucosaminyl derivative + GDP-beta-L-fucose = a beta-D-galactosyl-(1-&gt;4)-[alpha-L-fucosyl-(1-&gt;3)]-N-acetyl-beta-D-glucosaminyl derivative + GDP + H(+). The catalysed reaction is an alpha-Neu5Ac-(2-&gt;3)-beta-D-Gal-(1-&gt;4)-beta-D-GlcNAc-(1-&gt;3)-beta-D-Gal-(1-&gt;4)-[alpha-L-Fuc-(1-&gt;3)]-beta-D-GlcNAc derivative + GDP-beta-L-fucose = an alpha-Neu5Ac-(2-&gt;3)-beta-D-Gal-(1-&gt;4)-[alpha-L-Fuc-(1-&gt;3)]-beta-D-GlcNAc-(1-&gt;3)-beta-D-Gal-(1-&gt;4)-[alpha-L-Fuc-(1-&gt;3)]-beta-D-GlcNAc derivative + GDP + H(+). It carries out the reaction Lc4Cer + GDP-beta-L-fucose = a lactoside III(4)-a-Fuc-Lc4Cer + GDP + H(+). It catalyses the reaction a beta-D-Gal-(1-&gt;3)-beta-D-GlcNAc-(1-&gt;3)-beta-D-Gal-(1-&gt;4)-beta-D-Glc-(1&lt;-&gt;1')-Cer(d18:1(4E)) + GDP-beta-L-fucose = a III(4)-a-Fuc-Lc4Cer(d18:1(4E)) + GDP + H(+). The enzyme catalyses N-acetyl-alpha-neuraminosyl-(2-&gt;3)-beta-D-galactosyl-(1-&gt;3)-[N-acetyl-alpha-neuraminosyl-(2-&gt;6)]-N-acetyl-beta-D-glucosaminyl-(1-&gt;3)-beta-D-galactosyl-(1-&gt;4)-beta-D-glucosyl-(1&lt;-&gt;1')-N-acyl-sphing-4-enine + GDP-beta-L-fucose = N-acetyl-alpha-neuraminosyl-(2-&gt;3)-beta-D-galactosyl-(1-&gt;3)-alpha-L-fucosyl-(1-&gt;4)-[N-acetyl-alpha-neuraminosyl-(2-&gt;6)-N-acetyl-beta-D-glucosaminyl-(1-&gt;3)]-beta-D-galactosyl-(1-&gt;4)-beta-D-glucosyl-(1&lt;-&gt;1')-N-acyl-sphing-4-enine + GDP + H(+). The catalysed reaction is N-acetyl-alpha-neuraminosyl-(2-&gt;3)-beta-D-galactosyl-(1-&gt;3)-N-acetyl-beta-D-glucosaminyl-(1-&gt;3)-beta-D-galactosyl-(1-&gt;4)-beta-D-glucosyl-(1&lt;-&gt;1')-N-acyl-sphing-4-enine + GDP-beta-L-fucose = N-acetyl-alpha-neuraminosyl-(2-&gt;3)-beta-D-galactosyl-(1-&gt;3)-alpha-L-fucosyl-(1-&gt;4)-[N-acetyl-beta-D-glucosaminyl-(1-&gt;3)]-beta-D-galactosyl-(1-&gt;4)-beta-D-glucosyl-(1&lt;-&gt;1')-N-acyl-sphing-4-enine + GDP + H(+). It carries out the reaction beta-D-galactosyl-(1-&gt;3)-N-acetyl-D-glucosamine + GDP-beta-L-fucose = beta-D-galactosyl-(1-&gt;3)-[alpha-L-fucosyl-(1-&gt;4)]-N-acetyl-D-glucosamine + GDP + H(+). It catalyses the reaction alpha-L-Fuc-(1-&gt;2)-beta-D-Gal-(1-&gt;3)-D-GlcNAc + GDP-beta-L-fucose = alpha-L-Fuc-(1-&gt;2)-beta-D-Gal-(1-&gt;3)-[alpha-L-Fuc-(1-&gt;4)]-D-GlcNAc + GDP + H(+). The enzyme catalyses alpha-L-Fuc-(1-&gt;2)-beta-D-Gal-(1-&gt;4)-D-GlcNAc + GDP-beta-L-fucose = alpha-L-Fuc-(1-&gt;2)-beta-D-Gal-(1-&gt;4)-[alpha-L-Fuc-(1-&gt;3)]-D-GlcNAc + GDP + H(+). The catalysed reaction is beta-D-galactosyl-(1-&gt;4)-N-acetyl-D-glucosamine + GDP-beta-L-fucose = beta-D-galactosyl-(1-&gt;4)-[alpha-L-fucosyl-(1-&gt;3)]-N-acetyl-D-glucosamine + GDP + H(+). It carries out the reaction lactose + GDP-beta-L-fucose = beta-D-galactosyl-(1-&gt;4)-[alpha-L-fucosyl-(1-&gt;3)]-D-glucose + GDP + H(+). It catalyses the reaction an alpha-Neu5Ac-(2-&gt;3)-beta-D-Gal-(1-&gt;3)-D-GlcNAc derivative + GDP-beta-L-fucose = an alpha-Neu5Ac-(2-&gt;3)-beta-D-Gal-(1-&gt;3)-[alpha-L-Fuc-(1-&gt;4)]-beta-D-GlcNAc derivative + GDP + H(+). It participates in protein modification; protein glycosylation. Functionally, catalyzes the transfer of L-fucose, from a guanosine diphosphate-beta-L-fucose, to both the subterminal N-acetyl glucosamine (GlcNAc) of type 1 chain (beta-D-Gal-(1-&gt;3)-beta-D-GlcNAc) glycolipids and oligosaccharides via an alpha(1,4) linkage, and the subterminal glucose (Glc) or GlcNAc of type 2 chain (beta-D-Gal-(1-&gt;4)-beta-D-GlcNAc) oligosaccharides via an alpha(1,3) linkage, independently of the presence of terminal alpha-L-fucosyl-(1,2) moieties on the terminal galactose of these acceptors and participates in the blood groups Lewis determination and expression of Lewis a (Le(a)), lewis b (Le(b)), Lewis x/SSEA-1 (Le(x)) and lewis y (Le(y)) antigens. Also catalyzes the transfer of L-fucose to subterminal GlcNAc of sialyl- and disialyl-lactotetraosylceramide to produce sialyl Lewis a (sLe(a)) and disialyl Lewis a via an alpha(1,4) linkage and therefore may regulate cell surface sialyl Lewis a expression and consequently regulates adhesive properties to E-selectin, cell proliferation and migration. Catalyzes the transfer of an L-fucose to 3'-sialyl-N-acetyllactosamine by an alpha(1,3) linkage, which allows the formation of sialyl-Lewis x structure and therefore may regulate the sialyl-Lewis x surface antigen expression and consequently adhesive properties to E-selectin. Prefers type 1 chain over type 2 acceptors. Type 1 tetrasaccharide is a better acceptor than type 1 disaccharide suggesting that a beta anomeric configuration of GlcNAc in the substrate is preferred. Lewis-positive (Le(+)) individuals have an active enzyme while Lewis-negative (Le(-)) individuals have an inactive enzyme. The sequence is that of 3-galactosyl-N-acetylglucosaminide 4-alpha-L-fucosyltransferase FUT3 from Bos taurus (Bovine).